The primary structure comprises 300 residues: Junctional adhesion molecule A (300 aa).

The N-terminal stretch at 1 to 26 (MGTEGKAGRKLLFLFTSMILGSLVQG) is a signal peptide. Residues 27–238 (KGSVYTAQSD…MDAVELNVGG (212 aa)) lie on the Extracellular side of the membrane. 2 Ig-like V-type domains span residues 28–122 (GSVY…GEVS) and 134–230 (PTIS…AHMD). Asn42 is a glycosylation site (N-linked (GlcNAc...) asparagine). 2 disulfide bridges follow: Cys49–Cys108 and Cys152–Cys212. N-linked (GlcNAc...) asparagine glycosylation is present at Asn185. Residues 239-259 (IVAAVLVTLILLGLLIFGVWF) traverse the membrane as a helical segment. The Cytoplasmic segment spans residues 260–299 (AYSRGYFERTKKGTAPGKKVIYSQPSTRSEGEFKQTSSFL). Residues Ser282, Ser285, and Ser288 each carry the phosphoserine modification.

This sequence belongs to the immunoglobulin superfamily. In terms of assembly, interacts with the ninth PDZ domain of MPDZ. Interacts with the first PDZ domain of PARD3. The association between PARD3 and PARD6B probably disrupts this interaction. Interacts with ITGAL (via I-domain). Interacts with CD151.

It localises to the cell junction. The protein resides in the tight junction. It is found in the cell membrane. Seems to play a role in epithelial tight junction formation. Appears early in primordial forms of cell junctions and recruits PARD3. The association of the PARD6-PARD3 complex may prevent the interaction of PARD3 with JAM1, thereby preventing tight junction assembly. Plays a role in regulating monocyte transmigration involved in integrity of epithelial barrier. Ligand for integrin alpha-L/beta-2 involved in memory T-cell and neutrophil transmigration. Involved in platelet activation. This chain is Junctional adhesion molecule A (F11r), found in Mus musculus (Mouse).